Here is a 443-residue protein sequence, read N- to C-terminus: Transcriptional adapter 2-alpha (443 aa).

Position 6 is a phosphoserine (S6). A ZZ-type zinc finger spans residues 12 to 69; that stretch reads SDKPPCRGCSSYLMEPYIKCAECGPPPFFLCLQCFTRGFEYKKHQSDHTYEIMTSDFP. Residues C17, C20, C31, C34, C42, C45, H55, and H59 each contribute to the Zn(2+) site. Positions 70-122 constitute an SANT domain; the sequence is VLDPSWTAQEEMALLEAVMDCGFGNWQDVANQMCTKTKEECEKHYMKHFINNP. Glycyl lysine isopeptide (Lys-Gly) (interchain with G-Cter in SUMO2) cross-links involve residues K132 and K138. The region spanning 356-443 is the SWIRM domain; that stretch reads NSGRRSAPPL…LIREGYITKA (88 aa). A DNA-binding region spans residues 426 to 435; that stretch reads KTRKIYDFLI.

As to quaternary structure, interacts with GCN5 and NR3C1. Associated with the P/CAF protein in the PCAF complex. Component of the PCAF complex, at least composed of TADA2L/ADA2, TADA3L/ADA3, TAF5L/PAF65-beta, TAF6L/PAF65-alpha, TAF10/TAFII30, TAF12/TAFII20, TAF9/TAFII31 and TRRAP. Component of the ADA2A-containing complex (ATAC), composed of KAT14, KAT2A, TADA2L, TADA3L, ZZ3, MBIP, WDR5, YEATS2, CCDC101 and DR1. Interacts with CCDC134.

The protein resides in the nucleus. It localises to the chromosome. Component of the ATAC complex, a complex with histone acetyltransferase activity on histones H3 and H4. Required for the function of some acidic activation domains, which activate transcription from a distant site. Binds double-stranded DNA. Binds dinucleosomes, probably at the linker region between neighboring nucleosomes. Plays a role in chromatin remodeling. May promote TP53/p53 'Lys-321' acetylation, leading to reduced TP53 stability and transcriptional activity. May also promote XRCC6 acetylation thus facilitating cell apoptosis in response to DNA damage. The protein is Transcriptional adapter 2-alpha (Tada2a) of Rattus norvegicus (Rat).